Reading from the N-terminus, the 168-residue chain is MPTLLLGAAIPFGTIAYTLFIFLLLLVMLRKFAWGPLMGIMKEREEHVTNEIDAAERSNAEAKKLVEEQREMLKQSRVEAQELIERAKKQAVDQKDAIVAAAKEEAESIKASAVQEIQREKEQAIAALQEQVASLSVQIASKVIEKELKEEDQVKLIRDYIKEVGEAR.

A helical transmembrane segment spans residues 9–29 (AIPFGTIAYTLFIFLLLLVML).

The protein belongs to the ATPase B chain family. In terms of assembly, F-type ATPases have 2 components, F(1) - the catalytic core - and F(0) - the membrane proton channel. F(1) has five subunits: alpha(3), beta(3), gamma(1), delta(1), epsilon(1). F(0) has three main subunits: a(1), b(2) and c(10-14). The alpha and beta chains form an alternating ring which encloses part of the gamma chain. F(1) is attached to F(0) by a central stalk formed by the gamma and epsilon chains, while a peripheral stalk is formed by the delta and b chains.

The protein resides in the cell membrane. Its function is as follows. F(1)F(0) ATP synthase produces ATP from ADP in the presence of a proton or sodium gradient. F-type ATPases consist of two structural domains, F(1) containing the extramembraneous catalytic core and F(0) containing the membrane proton channel, linked together by a central stalk and a peripheral stalk. During catalysis, ATP synthesis in the catalytic domain of F(1) is coupled via a rotary mechanism of the central stalk subunits to proton translocation. In terms of biological role, component of the F(0) channel, it forms part of the peripheral stalk, linking F(1) to F(0). In Bacillus cereus (strain ATCC 10987 / NRS 248), this protein is ATP synthase subunit b.